The primary structure comprises 633 residues: MMVMTDKFNYEELGLKVGLEIHRQLDTKKLFSPVPSELSDKVEFTFQRRLRPTMSELGEIDPAALEEFKKGRVYVYEGNYELTDLVYMDEEPPRGPDREALEVALQIAYLLNAKPVDEVYYMRKIVIDGSNVSGFQRTAIIATDGKVETPWGAVGIPTICLEEDAARIIERKDKEVIYRLDRLGIPLIEISTTPDIHHPEQAKVVAKFIGDALRATKKVKRGLGTIRQDLNVSIKGGARIEIKGVQELDMIPIIIEREVERQLNLLKIRDELRKRGVKPKDIKEEFYDVTDIFENTKSKIIARVIKKGGKVLAIKLPKFRGLIGREIQPGRRLGTEFADRAKKYVPGIFHIDELPNYGISQEEVNKVIERLNLSEEDAFVLVAAEEEKAKNALREVIKRAREAIEGVPEETRRALPDGNTEYMRPLPGKARMYPETDIPPLRIPDDLKKKIKENLPELPQAKVERYVKEYKLDRSLAQTLVDDERDELFEELVSMGVKPSLAASILVVVLKGLRKEVPIENVTDEHIREAFQLYLEGKIAKEAFEEIFKELARNPSKSAREVAEEKGLTLLSEEEVTRIIEEVIQQNIEVVKAKGMGAMGLIMGRVMAKVRGKADGKLVSQIVRRKLQEISGG.

The tract at residues 414-437 (ALPDGNTEYMRPLPGKARMYPETD) is disordered.

The protein belongs to the GatB/GatE family. GatE subfamily. Heterodimer of GatD and GatE.

The enzyme catalyses L-glutamyl-tRNA(Gln) + L-glutamine + ATP + H2O = L-glutaminyl-tRNA(Gln) + L-glutamate + ADP + phosphate + H(+). Functionally, allows the formation of correctly charged Gln-tRNA(Gln) through the transamidation of misacylated Glu-tRNA(Gln) in organisms which lack glutaminyl-tRNA synthetase. The reaction takes place in the presence of glutamine and ATP through an activated gamma-phospho-Glu-tRNA(Gln). The GatDE system is specific for glutamate and does not act on aspartate. In Pyrococcus abyssi (strain GE5 / Orsay), this protein is Glutamyl-tRNA(Gln) amidotransferase subunit E.